We begin with the raw amino-acid sequence, 484 residues long: PTS system N-acetylmuramic acid-specific EIIBC component (484 aa).

One can recognise a PTS EIIB type-1 domain in the interval 1–89 (MAKITTSMIQ…NEMMEGEEDN (89 aa)). The Phosphocysteine intermediate; for EIIB activity role is filled by cysteine 28. The segment at 83–106 (MEGEEDNSASTTAESRDLKDVASE) is disordered. Basic and acidic residues predominate over residues 96-106 (ESRDLKDVASE). Residues 124 to 484 (SKFATIFTPL…FFGTKNVDLS (361 aa)) enclose the PTS EIIC type-1 domain. Helical transmembrane passes span 126-146 (FATI…LLGF), 168-188 (LILY…ILIG), 194-214 (AFGG…LGYN), 232-252 (GIDP…GAGV), 273-293 (TLLI…GVLF), 312-332 (ILAG…FVPV), 345-365 (LFPI…ALYA), 379-399 (GSII…VTLP), 404-424 (FITA…VSYM), and 451-471 (IFAG…AGFL).

Its subcellular location is the cell inner membrane. It catalyses the reaction N-acetyl-beta-D-muramate(out) + N(pros)-phospho-L-histidyl-[protein] = N-acetyl-beta-D-muramate 6-phosphate(in) + L-histidyl-[protein]. Its function is as follows. The phosphoenolpyruvate-dependent sugar phosphotransferase system (sugar PTS), a major carbohydrate active transport system, catalyzes the phosphorylation of incoming sugar substrates concomitantly with their translocation across the cell membrane. This system is involved in N-acetylmuramic acid (MurNAc) transport, yielding cytoplasmic MurNAc-6-P. Is also able to take up anhydro-N-acetylmuramic acid (anhMurNAc), but cannot phosphorylate the carbon 6, probably because of the 1,6-anhydro ring. The polypeptide is PTS system N-acetylmuramic acid-specific EIIBC component (murP) (Aliivibrio fischeri (strain ATCC 700601 / ES114) (Vibrio fischeri)).